We begin with the raw amino-acid sequence, 370 residues long: 3-isopropylmalate dehydrogenase (370 aa).

77–90 (GPKWDGVPYDARPE) contacts NAD(+). The substrate site is built by Arg97, Arg107, Arg135, and Asp226. Mg(2+) contacts are provided by Asp226, Asp250, and Asp254. 290-302 (GSAPDIAGKGMAN) provides a ligand contact to NAD(+).

It belongs to the isocitrate and isopropylmalate dehydrogenases family. LeuB type 1 subfamily. As to quaternary structure, homodimer. Requires Mg(2+) as cofactor. It depends on Mn(2+) as a cofactor.

Its subcellular location is the cytoplasm. The enzyme catalyses (2R,3S)-3-isopropylmalate + NAD(+) = 4-methyl-2-oxopentanoate + CO2 + NADH. The protein operates within amino-acid biosynthesis; L-leucine biosynthesis; L-leucine from 3-methyl-2-oxobutanoate: step 3/4. Functionally, catalyzes the oxidation of 3-carboxy-2-hydroxy-4-methylpentanoate (3-isopropylmalate) to 3-carboxy-4-methyl-2-oxopentanoate. The product decarboxylates to 4-methyl-2 oxopentanoate. In Rhodopseudomonas palustris (strain ATCC BAA-98 / CGA009), this protein is 3-isopropylmalate dehydrogenase.